The following is a 297-amino-acid chain: uncharacterized protein (297 aa).

Residue Glu46 is part of the active site.

Belongs to the PhzF family. In terms of assembly, homodimer and homotetramer.

This is an uncharacterized protein from Salmonella typhimurium (strain LT2 / SGSC1412 / ATCC 700720).